Here is a 205-residue protein sequence, read N- to C-terminus: GTP cyclohydrolase-2 (205 aa).

Residue 49–53 (RIHSE) participates in GTP binding. Positions 54, 65, and 67 each coordinate Zn(2+). Residues Q70, 92–94 (EGR), and T114 each bind GTP. Catalysis depends on D126, which acts as the Proton acceptor. The active-site Nucleophile is R128. Residues T149 and K154 each coordinate GTP.

It belongs to the GTP cyclohydrolase II family. Zn(2+) is required as a cofactor.

It carries out the reaction GTP + 4 H2O = 2,5-diamino-6-hydroxy-4-(5-phosphoribosylamino)-pyrimidine + formate + 2 phosphate + 3 H(+). The protein operates within cofactor biosynthesis; riboflavin biosynthesis; 5-amino-6-(D-ribitylamino)uracil from GTP: step 1/4. Catalyzes the conversion of GTP to 2,5-diamino-6-ribosylamino-4(3H)-pyrimidinone 5'-phosphate (DARP), formate and pyrophosphate. The chain is GTP cyclohydrolase-2 from Shewanella loihica (strain ATCC BAA-1088 / PV-4).